A 393-amino-acid polypeptide reads, in one-letter code: Cytochrome b (393 aa).

Transmembrane regions (helical) follow at residues 33-53 (FGSL…FLAM), 77-98 (WFLR…YLHM), 113-133 (WNIG…GYVL), and 178-198 (FFAI…LHLL). His-83 and His-97 together coordinate heme b. Residues His-182 and His-196 each coordinate heme b. Position 201 (His-201) interacts with a ubiquinone. 4 helical membrane passes run 226–246 (YKDV…ALFA), 288–308 (LGGV…PFIH), 320–340 (LSQL…WIGG), and 347–367 (FIII…ILMP).

Belongs to the cytochrome b family. As to quaternary structure, the cytochrome bc1 complex contains 3 respiratory subunits (MT-CYB, CYC1 and UQCRFS1), 2 core proteins (UQCRC1 and UQCRC2) and probably 6 low-molecular weight proteins. Heme b is required as a cofactor.

The protein resides in the mitochondrion inner membrane. Component of the ubiquinol-cytochrome c reductase complex (complex III or cytochrome b-c1 complex) that is part of the mitochondrial respiratory chain. The b-c1 complex mediates electron transfer from ubiquinol to cytochrome c. Contributes to the generation of a proton gradient across the mitochondrial membrane that is then used for ATP synthesis. In Synbranchus marmoratus (Marbled swamp eel), this protein is Cytochrome b (mt-cyb).